A 30-amino-acid polypeptide reads, in one-letter code: Cysteine-rich venom protein mossambin (30 aa).

The tract at residues 1–30 (NVDFNSESTRRKKKQNEIVDLHNSLRRTVN) is disordered.

It belongs to the CRISP family. Contains 8 disulfide bonds. As to expression, expressed by the venom gland.

It is found in the secreted. Its function is as follows. Inhibits calcium-activated potassium channels (KCa), voltage-gated potassium channel (Kv), and the calcium release channel/ryanodine receptor (RyR). The protein is Cysteine-rich venom protein mossambin of Naja mossambica (Mozambique spitting cobra).